We begin with the raw amino-acid sequence, 309 residues long: Cilia-and flagella-associated protein 96 (309 aa).

Positions 220–249 (EEKKKTISNTFKPSSPGKKPGGMKAGTFDP) are disordered.

The protein belongs to the CFAP96 family. In terms of tissue distribution, detected in testis and fetal liver.

It is found in the cytoplasm. The protein localises to the cytoskeleton. It localises to the microtubule organizing center. Its subcellular location is the centrosome. The protein is Cilia-and flagella-associated protein 96 of Homo sapiens (Human).